We begin with the raw amino-acid sequence, 311 residues long: Aspartate carbamoyltransferase catalytic subunit (311 aa).

The carbamoyl phosphate site is built by arginine 57 and threonine 58. Lysine 86 serves as a coordination point for L-aspartate. The carbamoyl phosphate site is built by arginine 107, histidine 135, and glutamine 138. Arginine 168 and arginine 230 together coordinate L-aspartate. Positions 269 and 270 each coordinate carbamoyl phosphate.

It belongs to the aspartate/ornithine carbamoyltransferase superfamily. ATCase family. As to quaternary structure, heterooligomer of catalytic and regulatory chains.

It catalyses the reaction carbamoyl phosphate + L-aspartate = N-carbamoyl-L-aspartate + phosphate + H(+). It functions in the pathway pyrimidine metabolism; UMP biosynthesis via de novo pathway; (S)-dihydroorotate from bicarbonate: step 2/3. Catalyzes the condensation of carbamoyl phosphate and aspartate to form carbamoyl aspartate and inorganic phosphate, the committed step in the de novo pyrimidine nucleotide biosynthesis pathway. The sequence is that of Aspartate carbamoyltransferase catalytic subunit from Staphylothermus marinus (strain ATCC 43588 / DSM 3639 / JCM 9404 / F1).